Here is a 444-residue protein sequence, read N- to C-terminus: 3-phosphoshikimate 1-carboxyvinyltransferase (444 aa).

3-phosphoshikimate is bound by residues Lys-32, Ser-33, and Arg-37. Lys-32 is a binding site for phosphoenolpyruvate. Phosphoenolpyruvate is bound by residues Gly-105 and Arg-133. 3-phosphoshikimate-binding residues include Ser-178, Gln-180, Asp-326, and Lys-353. Gln-180 contributes to the phosphoenolpyruvate binding site. Asp-326 functions as the Proton acceptor in the catalytic mechanism. Residues Arg-357 and Arg-398 each coordinate phosphoenolpyruvate.

It belongs to the EPSP synthase family. In terms of assembly, monomer.

Its subcellular location is the cytoplasm. It catalyses the reaction 3-phosphoshikimate + phosphoenolpyruvate = 5-O-(1-carboxyvinyl)-3-phosphoshikimate + phosphate. It functions in the pathway metabolic intermediate biosynthesis; chorismate biosynthesis; chorismate from D-erythrose 4-phosphate and phosphoenolpyruvate: step 6/7. Its function is as follows. Catalyzes the transfer of the enolpyruvyl moiety of phosphoenolpyruvate (PEP) to the 5-hydroxyl of shikimate-3-phosphate (S3P) to produce enolpyruvyl shikimate-3-phosphate and inorganic phosphate. The polypeptide is 3-phosphoshikimate 1-carboxyvinyltransferase (Nitrosococcus oceani (strain ATCC 19707 / BCRC 17464 / JCM 30415 / NCIMB 11848 / C-107)).